The chain runs to 319 residues: Pre T-cell antigen receptor alpha (319 aa).

The first 16 residues, 1–16 (MAESWLLLLLALGCPA), serve as a signal peptide directing secretion. Residues 17-160 (LPTEVTTLLR…LRGTRALVLR (144 aa)) are Extracellular-facing. The cysteines at positions 58 and 118 are disulfide-linked. Asparagine 78 carries an N-linked (GlcNAc...) asparagine glycan. The helical transmembrane segment at 161-181 (LGALRLLLFKLLLLDVLLTCG) threads the bilayer. Residues 182-319 (RLHAPPAARG…PPADPSFPGG (138 aa)) lie on the Cytoplasmic side of the membrane. Low complexity predominate over residues 189-207 (ARGDPAGASGPGAPSLPAP). The segment at 189 to 293 (ARGDPAGASG…VLRAWSSGPS (105 aa)) is disordered. The segment covering 260 to 271 (RRRRVHTRRPRR) has biased composition (basic residues).

In terms of assembly, heterodimer with TCRB; disulfide linked. This heterodimer assembles with CD3 proteins into a signaling-competent pre-T-cell receptor complex. Interacts with RHBDD1.

It localises to the membrane. The protein resides in the cell membrane. In terms of biological role, component of the pre-T-cell receptor complex (composed of PTCRA, TCRB and the CD3 complex) that has a crucial role in early T-cell development, particularly alpha-beta T cell differentiation. This chain is Pre T-cell antigen receptor alpha (PTCRA), found in Bos taurus (Bovine).